The sequence spans 224 residues: UPF0758 protein Rpic_2712 (224 aa).

The MPN domain maps to 102–224 (TFESAQSVKD…VYGFLEHGKM (123 aa)). Zn(2+) is bound by residues H173, H175, and D186. The short motif at 173–186 (HNHPTGNTEPSESD) is the JAMM motif element.

Belongs to the UPF0758 family.

This is UPF0758 protein Rpic_2712 from Ralstonia pickettii (strain 12J).